A 973-amino-acid polypeptide reads, in one-letter code: Translation initiation factor IF-2 (973 aa).

The tract at residues 52–388 (PDQEEVKPAA…QAQKPAQPLE (337 aa)) is disordered. Basic and acidic residues-rich tracts occupy residues 83–120 (ESRK…DHYK), 128–148 (VPSR…DKAR), 157–172 (QGAR…ERTR), 186–202 (VQQE…RPPF), 210–246 (PQHE…DKGA), 272–288 (RAGE…ETKP), 314–333 (LLDD…EKQK), and 343–360 (KSRE…ERLR). Low complexity predominate over residues 374–386 (AKPQEQAQKPAQP). The tr-type G domain occupies 472–641 (DRPCVVTVMG…LLVAEMSELK (170 aa)). The interval 481 to 488 (GHVDHGKT) is G1. 481 to 488 (GHVDHGKT) contacts GTP. The interval 506 to 510 (GITQH) is G2. The interval 527–530 (DTPG) is G3. GTP is bound by residues 527–531 (DTPGH) and 581–584 (NKID). Residues 581–584 (NKID) form a G4 region. Positions 617–619 (SAL) are G5.

It belongs to the TRAFAC class translation factor GTPase superfamily. Classic translation factor GTPase family. IF-2 subfamily.

Its subcellular location is the cytoplasm. Its function is as follows. One of the essential components for the initiation of protein synthesis. Protects formylmethionyl-tRNA from spontaneous hydrolysis and promotes its binding to the 30S ribosomal subunits. Also involved in the hydrolysis of GTP during the formation of the 70S ribosomal complex. The chain is Translation initiation factor IF-2 from Pelotomaculum thermopropionicum (strain DSM 13744 / JCM 10971 / SI).